A 203-amino-acid chain; its full sequence is Guanylate kinase (203 aa).

The Guanylate kinase-like domain maps to 5–184; sequence GMLIVLSGPS…AVQRIEKIIE (180 aa). 12–19 is an ATP binding site; that stretch reads GPSGVGKG.

The protein belongs to the guanylate kinase family.

It is found in the cytoplasm. It carries out the reaction GMP + ATP = GDP + ADP. Essential for recycling GMP and indirectly, cGMP. The polypeptide is Guanylate kinase (Latilactobacillus sakei subsp. sakei (strain 23K) (Lactobacillus sakei subsp. sakei)).